Reading from the N-terminus, the 88-residue chain is Gene 86 protein (88 aa).

The interval 64–88 is disordered; that stretch reads WRGNPSAYDDEVGDLEGFETQHSDY. Residues 71–80 are compositionally biased toward acidic residues; the sequence is YDDEVGDLEG.

The sequence is that of Gene 86 protein (86) from Mycobacterium (Mycobacteriophage L5).